The sequence spans 441 residues: Ubiquitin carboxyl-terminal hydrolase MINDY-3 (441 aa).

The active-site Nucleophile is C51. H284 acts as the Proton acceptor in catalysis.

It belongs to the MINDY deubiquitinase family. FAM188 subfamily.

It is found in the nucleus. It carries out the reaction Thiol-dependent hydrolysis of ester, thioester, amide, peptide and isopeptide bonds formed by the C-terminal Gly of ubiquitin (a 76-residue protein attached to proteins as an intracellular targeting signal).. Functionally, hydrolase that can remove 'Lys-48'-linked conjugated ubiquitin from proteins. The chain is Ubiquitin carboxyl-terminal hydrolase MINDY-3 (mindy3) from Xenopus tropicalis (Western clawed frog).